Consider the following 453-residue polypeptide: Tubulin gamma chain (453 aa).

Residue 142–148 (AGGTGSG) participates in GTP binding.

This sequence belongs to the tubulin family.

Its subcellular location is the cytoplasm. It localises to the cytoskeleton. The protein resides in the microtubule organizing center. The protein localises to the spindle pole body. Its function is as follows. Tubulin is the major constituent of microtubules. The gamma chain is found at microtubule organizing centers (MTOC) such as the spindle poles or the centrosome, suggesting that it is involved in the minus-end nucleation of microtubule assembly. The polypeptide is Tubulin gamma chain (TUB4) (Coprinopsis cinerea (strain Okayama-7 / 130 / ATCC MYA-4618 / FGSC 9003) (Inky cap fungus)).